The sequence spans 159 residues: Ribosome maturation factor RimP (159 aa).

The protein belongs to the RimP family.

It localises to the cytoplasm. Functionally, required for maturation of 30S ribosomal subunits. The polypeptide is Ribosome maturation factor RimP (Lacticaseibacillus casei (strain BL23) (Lactobacillus casei)).